Reading from the N-terminus, the 469-residue chain is 3-isopropylmalate dehydratase large subunit (469 aa).

3 residues coordinate [4Fe-4S] cluster: Cys-348, Cys-409, and Cys-412.

Belongs to the aconitase/IPM isomerase family. LeuC type 1 subfamily. In terms of assembly, heterodimer of LeuC and LeuD. [4Fe-4S] cluster is required as a cofactor.

The catalysed reaction is (2R,3S)-3-isopropylmalate = (2S)-2-isopropylmalate. Its pathway is amino-acid biosynthesis; L-leucine biosynthesis; L-leucine from 3-methyl-2-oxobutanoate: step 2/4. Functionally, catalyzes the isomerization between 2-isopropylmalate and 3-isopropylmalate, via the formation of 2-isopropylmaleate. The chain is 3-isopropylmalate dehydratase large subunit from Nitrosococcus oceani (strain ATCC 19707 / BCRC 17464 / JCM 30415 / NCIMB 11848 / C-107).